The chain runs to 722 residues: Endoglucanase F (722 aa).

The signal sequence occupies residues 1-29 (MSKNFKRVGAVAVAAAMSLSIMATTSINA). Residues 142–165 (PEFQDPSKYPSPLDTSQPVGRDPI) form a disordered region. Residues 154-165 (LDTSQPVGRDPI) are compositionally biased toward polar residues. Residues 661 to 722 (PEKLLGDVNG…LLKKALLSIQ (62 aa)) form the Dockerin domain.

Belongs to the glycosyl hydrolase 48 (cellulase L) family.

The catalysed reaction is Endohydrolysis of (1-&gt;4)-beta-D-glucosidic linkages in cellulose, lichenin and cereal beta-D-glucans.. In terms of biological role, probable endoglucanase involved in the degradation of cellulose or related beta-glucans. The polypeptide is Endoglucanase F (celCCF) (Ruminiclostridium cellulolyticum (strain ATCC 35319 / DSM 5812 / JCM 6584 / H10) (Clostridium cellulolyticum)).